Reading from the N-terminus, the 95-residue chain is Beta-defensin 132 (95 aa).

The first 22 residues, 1–22 (MKFLLLVLAALGFLTQVIPASA), serve as a signal peptide directing secretion. 3 disulfides stabilise this stretch: Cys27–Cys55, Cys35–Cys49, and Cys39–Cys56. Residues 74–95 (HWQSRRRNTQRKDKKQQTTVTS) are disordered. Over residues 76–87 (QSRRRNTQRKDK) the composition is skewed to basic residues.

Belongs to the beta-defensin family.

Its subcellular location is the secreted. Its function is as follows. Has antibacterial activity. In Homo sapiens (Human), this protein is Beta-defensin 132 (DEFB132).